We begin with the raw amino-acid sequence, 727 residues long: Polyribonucleotide nucleotidyltransferase (727 aa).

2 residues coordinate Mg(2+): Asp488 and Asp494. Positions 555–614 (PKLYTMKINPEKIRDVIGKGGATIRALTDETGCQINIEEDGTITIAATEAAKADEAKRRI) constitute a KH domain. The 69-residue stretch at 624–692 (GKIYEGPVTK…DKGRVKLSMK (69 aa)) folds into the S1 motif domain. Residues 691–727 (MKALADRPAGDSGRPAPAERGERRERRDGGASEQQQQ) form a disordered region. Over residues 707-720 (PAERGERRERRDGG) the composition is skewed to basic and acidic residues.

Belongs to the polyribonucleotide nucleotidyltransferase family. Mg(2+) is required as a cofactor.

Its subcellular location is the cytoplasm. It carries out the reaction RNA(n+1) + phosphate = RNA(n) + a ribonucleoside 5'-diphosphate. In terms of biological role, involved in mRNA degradation. Catalyzes the phosphorolysis of single-stranded polyribonucleotides processively in the 3'- to 5'-direction. This chain is Polyribonucleotide nucleotidyltransferase, found in Acidovorax sp. (strain JS42).